The following is a 504-amino-acid chain: Pre-mRNA-processing factor 19 (504 aa).

The residue at position 2 (serine 2) is an N-acetylserine. One can recognise a U-box domain in the interval 2–73; it reads SLICSISNEV…KPPSATSIPA (72 aa). The interval 68 to 223 is may mediate interaction with PSMC5; it reads ATSIPAILKA…VGLHSASIPG (156 aa). 4 positions are modified to N6-acetyllysine: lysine 122, lysine 179, lysine 244, and lysine 261. A WD 1 repeat occupies 219 to 259; it reads ASIPGILALDLCPSDTNKILTGGADKNVVVFDKSTEQILAT. 6 WD repeats span residues 262–301, 304–345, 348–387, 390–429, 433–472, and 473–503; these read GHTKKVTSVVFHPSQELVFSASPDATIRIWSVPNTSCVQV, AHES…TKVT, TSGCSLTCAQFHPDGLIFGTGTMDSQIKIWDLKERTNVAN, GHSGPITSIAFSENGYYLATAADDSSVKLWDLRKLKNFKT, DNNFEVKSLIFDQSGTYLALGGTDVQIYICKQWTEILHFT, and EHSGLTTGVAFGHHAKFIASTGMDRSLKFYS.

It belongs to the WD repeat PRP19 family. As to quaternary structure, homotetramer. Component of activated, catalytic and post-catalytic spliceosomes. Component of the Prp19 complex/PRP19C/Nineteen complex/NTC and related complexes described as PRP19-CDC5L splicing complex and PSO4 complex. A homotetramer of PRPF19, CDC5L, PLRG1 and BCAS2 constitute the core of those complexes. The interaction with CDC5L, PLRG1 and BCAS2 is direct within this core complex. At least three less stably associated proteins CTNNBL1, CWC15 and HSPA8 are found in the Prp19 complex. The Prp19 complex associates with the spliceosome during its assembly and remodeling recruiting additional proteins. Component of the XAB2 complex, a multimeric protein complex composed of XAB2, PRPF19, AQR, ZNF830, ISY1, and PPIE. Interacts with CWC22 and EIF4A3 in an RNA-independent manner. Interacts with RPA1 and RPA2; the PRP19-CDC5L complex is recruited to the sites of DNA repair where it interacts with the replication protein A complex (RPA). Interacts with SETMAR; required for SETMAR recruitment to site of DNA damage. Interacts with U2AF2; the interaction is direct and recruits the Prp19 complex to RNA polymerase II C-terminal domain (CTD) and the pre-mRNA. Interacts with PRPF3. Interacts with APEX1, DNTT and PSMB4. Interacts with KNSTRN. Interacts with PSMC5. Isoform 2 (via N-terminus) interacts with PPIA. Isoform 2 does not interact with CDC5L. Interacts with KHDC4. Interacts with USB1. Interacts with DDX41. In terms of tissue distribution, expressed in white and brown adipose tissues, brain and to a lower extent in liver, kidney, muscle, lung and spleen (at protein level).

It is found in the nucleus. The protein resides in the nucleoplasm. Its subcellular location is the cytoplasm. The protein localises to the cytoskeleton. It localises to the spindle. It is found in the lipid droplet. It carries out the reaction S-ubiquitinyl-[E2 ubiquitin-conjugating enzyme]-L-cysteine + [acceptor protein]-L-lysine = [E2 ubiquitin-conjugating enzyme]-L-cysteine + N(6)-ubiquitinyl-[acceptor protein]-L-lysine.. Its pathway is protein modification; protein ubiquitination. Its function is as follows. Ubiquitin-protein ligase which is a core component of several complexes mainly involved in pre-mRNA splicing and DNA repair. Required for pre-mRNA splicing as component of the spliceosome. Core component of the PRP19C/Prp19 complex/NTC/Nineteen complex which is part of the spliceosome and participates in its assembly, its remodeling and is required for its activity. During assembly of the spliceosome, mediates 'Lys-63'-linked polyubiquitination of the U4 spliceosomal protein PRPF3. Ubiquitination of PRPF3 allows its recognition by the U5 component PRPF8 and stabilizes the U4/U5/U6 tri-snRNP spliceosomal complex. Recruited to RNA polymerase II C-terminal domain (CTD) and the pre-mRNA, it may also couple the transcriptional and spliceosomal machineries. The XAB2 complex, which contains PRPF19, is also involved in pre-mRNA splicing, transcription and transcription-coupled repair. Beside its role in pre-mRNA splicing PRPF19, as part of the PRP19-CDC5L complex, plays a role in the DNA damage response/DDR. It is recruited to the sites of DNA damage by the RPA complex where PRPF19 directly ubiquitinates RPA1 and RPA2. 'Lys-63'-linked polyubiquitination of the RPA complex allows the recruitment of the ATR-ATRIP complex and the activation of ATR, a master regulator of the DNA damage response. May also play a role in DNA double-strand break (DSB) repair by recruiting the repair factor SETMAR to altered DNA. As part of the PSO4 complex may also be involved in the DNA interstrand cross-links/ICLs repair process. In addition, may also mediate 'Lys-48'-linked polyubiquitination of substrates and play a role in proteasomal degradation. May play a role in the biogenesis of lipid droplets. May play a role in neural differentiation possibly through its function as part of the spliceosome. In terms of biological role, forced expression leads to suppression of neuronal differentiation, and on the contrary to stimulation of astroglial cell differentiation in retinoic acid-primed P19 cells. The chain is Pre-mRNA-processing factor 19 from Mus musculus (Mouse).